Reading from the N-terminus, the 477-residue chain is Glutamate--tRNA ligase 1 (477 aa).

Positions 12–22 (PSPTGALHLGN) match the 'HIGH' region motif. Positions 253 to 257 (PLSKR) match the 'KMSKS' region motif. Residue K256 coordinates ATP.

The protein belongs to the class-I aminoacyl-tRNA synthetase family. Glutamate--tRNA ligase type 1 subfamily. In terms of assembly, monomer.

Its subcellular location is the cytoplasm. It carries out the reaction tRNA(Glu) + L-glutamate + ATP = L-glutamyl-tRNA(Glu) + AMP + diphosphate. Its function is as follows. Catalyzes the attachment of glutamate to tRNA(Glu) in a two-step reaction: glutamate is first activated by ATP to form Glu-AMP and then transferred to the acceptor end of tRNA(Glu). The protein is Glutamate--tRNA ligase 1 of Halorhodospira halophila (strain DSM 244 / SL1) (Ectothiorhodospira halophila (strain DSM 244 / SL1)).